Consider the following 915-residue polypeptide: MAETLSGLGDSGAAGAAALSSASSETGTRRLSDLRVIDLRAELRKRNVDSSGNKSVLMERLKKAIEDEGGNPDEIEITSEGNKKTSKRSSKGRKPEEEGVEDNGLEENSGDGQEDVETSLENLQDIDIMDISVLDEAEIDNGSVADCVEDDDADNLQESLSDSRELVEGEMKELPEQLQEHAIEDKETINNLDTSSSDFTILQEIEEPSLEPENEKILDILGETCKSEPVKEESSELEQPFAQDTSSVGPDRKLAEEEDLFDSAHPEEGDLDLASESTAHAQSSKADSLLAVVKREPAEQPGDGERTDCEPVGLEPAVEQSSAASELAEASSEELAEAPTEAPSPEARDSKEDGRKFDFDACNEVPPAPKESSTSEGADQKMSSPEDDSDTKRLSKEEKGRSSCGRNFWVSGLSSTTRATDLKNLFSKYGKVVGAKVVTNARSPGARCYGFVTMSTAEEATKCINHLHKTELHGKMISVEKAKNEPVGKKTSDKRDSDGKKEKSSNSDRSTNLKRDDKCDRKDDAKKGDDGSGEKSKDQDDQKPGPSERSRATKSGSRGTERTVVMDKSKGVPVISVKTSGSKERASKSQDRKSASREKRSVVSFDKVKEPRKSRDSESHSRVRERSEREQRMQAQWEREERERLEIARERLAFQRQRLERERMERERLERERMHVEHERRREQERIHREREELRRQQELRYEQERRPAVRRPYDLDRRDDAYWPEAKRAALDERYHSDFNRQDRFHDFDHRDRGRYPDHSVDRREGSRSMMGEREGQHYPERHGGPERHGRDSRDGWGGYGSDKRMSEGRGLPPPPRRDWGDHGRREDDRSWQGTADGGMMDRDHKRWQGGERSMSGHSGPGHMMNRGGMSGRGSFAPGGASRGHPIPHGGMQGGFGGQSRGSRPSDARFTRRY.

The span at 1–24 (MAETLSGLGDSGAAGAAALSSASS) shows a compositional bias: low complexity. A disordered region spans residues 1-33 (MAETLSGLGDSGAAGAAALSSASSETGTRRLSD). At A2 the chain carries N-acetylalanine. Residues S24 and S55 each carry the phosphoserine modification. The 35-residue stretch at 31–65 (LSDLRVIDLRAELRKRNVDSSGNKSVLMERLKKAI) folds into the SAP domain. The tract at residues 64–118 (AIEDEGGNPDEIEITSEGNKKTSKRSSKGRKPEEEGVEDNGLEENSGDGQEDVET) is disordered. Positions 67-77 (DEGGNPDEIEI) are enriched in acidic residues. Position 79 is a phosphoserine (S79). Positions 98 to 118 (EGVEDNGLEENSGDGQEDVET) are enriched in acidic residues. Glycyl lysine isopeptide (Lys-Gly) (interchain with G-Cter in SUMO2) cross-links involve residues K172 and K186. Residue T188 is modified to Phosphothreonine. S195, S197, and S209 each carry phosphoserine. The interval 221–407 (LGETCKSEPV…EKGRSSCGRN (187 aa)) is disordered. Positions 225-234 (CKSEPVKEES) are enriched in basic and acidic residues. A Glycyl lysine isopeptide (Lys-Gly) (interchain with G-Cter in SUMO) cross-link involves residue K231. The segment covering 275-286 (SESTAHAQSSKA) has biased composition (polar residues). The span at 293-309 (VKREPAEQPGDGERTDC) shows a compositional bias: basic and acidic residues. K294 is covalently cross-linked (Glycyl lysine isopeptide (Lys-Gly) (interchain with G-Cter in SUMO)). Over residues 319-330 (EQSSAASELAEA) the composition is skewed to low complexity. Positions 346-359 (EARDSKEDGRKFDF) are enriched in basic and acidic residues. Positions 371-383 (ESSTSEGADQKMS) are enriched in polar residues. K381 participates in a covalent cross-link: Glycyl lysine isopeptide (Lys-Gly) (interchain with G-Cter in SUMO2). Residues S383 and S384 each carry the phosphoserine modification. Residues 390 to 401 (DTKRLSKEEKGR) show a composition bias toward basic and acidic residues. K392 is covalently cross-linked (Glycyl lysine isopeptide (Lys-Gly) (interchain with G-Cter in SUMO2)). In terms of domain architecture, RRM spans 406 to 484 (RNFWVSGLSS…KMISVEKAKN (79 aa)). S415 carries the post-translational modification Phosphoserine. 2 stretches are compositionally biased toward basic and acidic residues: residues 477–551 (ISVE…ERSR) and 559–570 (GTERTVVMDKSK). 3 disordered regions span residues 477–641 (ISVE…EREE), 671–708 (RERM…ERRP), and 749–915 (FDHR…TRRY). Residues K483, K514, K543, and K570 each participate in a glycyl lysine isopeptide (Lys-Gly) (interchain with G-Cter in SUMO2) cross-link. The segment at 528–792 (GDDGSGEKSK…RHGGPERHGR (265 aa)) is interaction with POLR2A. Interaction with SFRS1; SFRS9 and SFRS10. K578 is covalently cross-linked (Glycyl lysine isopeptide (Lys-Gly) (interchain with G-Cter in SUMO1); alternate). K578 participates in a covalent cross-link: Glycyl lysine isopeptide (Lys-Gly) (interchain with G-Cter in SUMO2); alternate. Phosphoserine occurs at positions 580, 582, 601, and 604. Over residues 581 to 641 (GSKERASKSQ…RMQAQWEREE (61 aa)) the composition is skewed to basic and acidic residues. The Nuclear localization signal motif lies at 599-616 (KRSVVSFDKVKEPRKSRD). An interaction with SAFB2 region spans residues 599-915 (KRSVVSFDKV…PSDARFTRRY (317 aa)). Position 607 is an N6-acetyllysine (K607). The segment covering 749–796 (FDHRDRGRYPDHSVDRREGSRSMMGEREGQHYPERHGGPERHGRDSRD) has biased composition (basic and acidic residues). At R811 the chain carries Omega-N-methylarginine. Composition is skewed to basic and acidic residues over residues 817 to 832 (PRRD…DDRS) and 841 to 851 (MMDRDHKRWQG). Residue K847 forms a Glycyl lysine isopeptide (Lys-Gly) (interchain with G-Cter in SUMO2) linkage. Asymmetric dimethylarginine occurs at positions 868, 874, and 884. Residues 892 to 901 (GMQGGFGGQS) are compositionally biased toward gly residues. The segment covering 905-915 (RPSDARFTRRY) has biased composition (basic and acidic residues).

As to quaternary structure, monomer and homodimer. Forms heterodimers with SAFB2. Interacts with KHDRBS3. Interacts with CLK2. Interacts with POLR2A, SRSF1/ASF, SRSF9/SRp30c and SFSF10/TRA2B. Interacts with isoform 1 and isoform 2 of SRPK1 and inhibits its activity. Interacts with RBMX. Interacts with FUS. Interacts with ZBED4. Post-translationally, sumoylated by PIAS1 with SUMO1 and SUMO2/3, desumoylated by SENP1. Sumoylation is required for transcriptional repressor activity. Ubiquitous. Expressed at high levels in the CNS and at low levels in the liver. Expressed in a wide number of breast cancer cell lines.

It is found in the nucleus. Binds to scaffold/matrix attachment region (S/MAR) DNA and forms a molecular assembly point to allow the formation of a 'transcriptosomal' complex (consisting of SR proteins and RNA polymerase II) coupling transcription and RNA processing. Functions as an estrogen receptor corepressor and can also bind to the HSP27 promoter and decrease its transcription. Thereby acts as a negative regulator of cell proliferation. When associated with RBMX, binds to and stimulates transcription from the SREBF1 promoter. The sequence is that of Scaffold attachment factor B1 (SAFB) from Homo sapiens (Human).